A 437-amino-acid chain; its full sequence is MVKKLGLNFKNTKTSVSELKQRIVFLIVAIIVFRIGSFIPIPGIDTTILSKILNNQNGTIVDMFNMFSGGALSRASIFALGIMPYISASIIIQLLTLVYPTLSEIKKEGESGRHRINQYTRYATLILALVQSIGIAMTLPNIAGIRSIIINTDFYFYLIAIISLVTSTMFLMWLGELITEYGIGNGISIIIFIGIIAGLPSAIGNTIEKTRQGDLHILLFLFILLLIFSVIFLVVFMERGQRKIVVHYAQRQQGRRIYETPSTHLPLKINMAGVIPAIFASSIVLFPATIISWCKVNHEWLTKILFYLQPNQFLYLILYISAIVFFCFFYTGLVFNPRETADNLKKSGAFISGIRPGEQTAKYINKIMLRLTLVGSLYITFICLIPEFMRSAMNVPFYFGGTSLLIVVVVIIDFITQIQTLIMSNQYESMLKKANLN.

The next 10 helical transmembrane spans lie at 23–43, 77–97, 125–145, 154–174, 183–203, 217–237, 271–291, 315–335, 367–387, and 395–415; these read IVFL…PIPG, IFAL…LLTL, LILA…IAGI, FYFY…LMWL, IGNG…PSAI, ILLF…VVFM, MAGV…ATII, YLIL…GLVF, IMLR…LIPE, and VPFY…IDFI.

Belongs to the SecY/SEC61-alpha family. In terms of assembly, component of the Sec protein translocase complex. Heterotrimer consisting of SecY, SecE and SecG subunits. The heterotrimers can form oligomers, although 1 heterotrimer is thought to be able to translocate proteins. Interacts with the ribosome. Interacts with SecDF, and other proteins may be involved. Interacts with SecA.

The protein resides in the cell membrane. Its function is as follows. The central subunit of the protein translocation channel SecYEG. Consists of two halves formed by TMs 1-5 and 6-10. These two domains form a lateral gate at the front which open onto the bilayer between TMs 2 and 7, and are clamped together by SecE at the back. The channel is closed by both a pore ring composed of hydrophobic SecY resides and a short helix (helix 2A) on the extracellular side of the membrane which forms a plug. The plug probably moves laterally to allow the channel to open. The ring and the pore may move independently. The polypeptide is Protein translocase subunit SecY (Buchnera aphidicola subsp. Acyrthosiphon pisum (strain APS) (Acyrthosiphon pisum symbiotic bacterium)).